Consider the following 183-residue polypeptide: Capsid protein (183 aa).

The interval 136–183 (NAPILSTLPETTVVRRRGRSPRRRTPSPRRRRSQSPRRRRSQSPASQC) is disordered. Over residues 149-176 (VRRRGRSPRRRTPSPRRRRSQSPRRRRS) the composition is skewed to basic residues. S155, S162, and S170 each carry phosphoserine; by host. The stretch at 155–161 (SPRRRTP) is one 1; half-length repeat. The tract at residues 155-177 (SPRRRTPSPRRRRSQSPRRRRSQ) is 3 X 8 AA repeats of S-P-R-R-R-[PR]-S-Q. A Bipartite nuclear localization signal motif is present at residues 158–175 (RRTPSPRRRRSQSPRRRR). Repeat copies occupy residues 162–169 (SPRRRRSQ) and 170–177 (SPRRRRSQ). The segment at 177-183 (QSPASQC) is RNA binding.

Belongs to the orthohepadnavirus core antigen family. In terms of assembly, homodimerizes, then multimerizes. Interacts with cytosol exposed regions of viral L glycoprotein present in the reticulum-to-Golgi compartment. Interacts with human FLNB. Phosphorylated form interacts with host importin alpha; this interaction depends on the exposure of the NLS, which itself depends upon genome maturation and/or phosphorylation of the capsid protein. Interacts with host NUP153. In terms of processing, phosphorylated by host SRPK1, SRPK2, and maybe protein kinase C or GAPDH. Phosphorylation is critical for pregenomic RNA packaging. Protein kinase C phosphorylation is stimulated by HBx protein and may play a role in transport of the viral genome to the nucleus at the late step during the viral replication cycle.

It is found in the virion. It localises to the host cytoplasm. In terms of biological role, self assembles to form an icosahedral capsid. Most capsids appear to be large particles with an icosahedral symmetry of T=4 and consist of 240 copies of capsid protein, though a fraction forms smaller T=3 particles consisting of 180 capsid proteins. Entering capsids are transported along microtubules to the nucleus. Phosphorylation of the capsid is thought to induce exposure of nuclear localization signal in the C-terminal portion of the capsid protein that allows binding to the nuclear pore complex via the importin (karyopherin-) alpha and beta. Capsids are imported in intact form through the nuclear pore into the nuclear basket, where it probably binds NUP153. Only capsids that contain the mature viral genome can release the viral DNA and capsid protein into the nucleoplasm. Immature capsids get stuck in the basket. Capsids encapsulate the pre-genomic RNA and the P protein. Pre-genomic RNA is reverse-transcribed into DNA while the capsid is still in the cytoplasm. The capsid can then either be directed to the nucleus, providing more genomes for transcription, or bud through the endoplasmic reticulum to provide new virions. This is Capsid protein from Pan troglodytes (Chimpanzee).